The chain runs to 314 residues: Ribosomal RNA small subunit methyltransferase H (314 aa).

S-adenosyl-L-methionine contacts are provided by residues 35–37 (GGH), Asp55, Phe79, Asp101, and Gln108. Residues 276–296 (QGGQTLKPVGKKLMPSEAEVA) form a disordered region.

This sequence belongs to the methyltransferase superfamily. RsmH family.

Its subcellular location is the cytoplasm. The enzyme catalyses cytidine(1402) in 16S rRNA + S-adenosyl-L-methionine = N(4)-methylcytidine(1402) in 16S rRNA + S-adenosyl-L-homocysteine + H(+). Its function is as follows. Specifically methylates the N4 position of cytidine in position 1402 (C1402) of 16S rRNA. The polypeptide is Ribosomal RNA small subunit methyltransferase H (Pectobacterium atrosepticum (strain SCRI 1043 / ATCC BAA-672) (Erwinia carotovora subsp. atroseptica)).